A 378-amino-acid chain; its full sequence is Cytochrome b (378 aa).

The next 4 membrane-spanning stretches (helical) occupy residues 34–54, 78–99, 114–134, and 179–199; these read FGSL…FLAM, WLLR…YLHV, WLIG…GYVL, and FFTF…IHLL. Positions 84 and 98 each coordinate heme b. 2 residues coordinate heme b: His183 and His197. His202 serves as a coordination point for a ubiquinone. 4 helical membrane passes run 227–247, 289–309, 321–341, and 348–368; these read FKDI…VLIS, LGGV…PFYN, INQV…WIGA, and YVLI…VNPL.

This sequence belongs to the cytochrome b family. In terms of assembly, the main subunits of complex b-c1 are: cytochrome b, cytochrome c1 and the Rieske protein. Requires heme b as cofactor.

It is found in the mitochondrion inner membrane. Functionally, component of the ubiquinol-cytochrome c reductase complex (complex III or cytochrome b-c1 complex) that is part of the mitochondrial respiratory chain. The b-c1 complex mediates electron transfer from ubiquinol to cytochrome c. Contributes to the generation of a proton gradient across the mitochondrial membrane that is then used for ATP synthesis. The chain is Cytochrome b (mt:Cyt-b) from Drosophila melanogaster (Fruit fly).